We begin with the raw amino-acid sequence, 286 residues long: 3-hydroxyanthranilate 3,4-dioxygenase (286 aa).

Residues 1–160 are domain A (catalytic); the sequence is MERRVRVKSW…SEQYRTGKPN (160 aa). O2 is bound at residue Arg43. Fe cation is bound by residues His47, Glu53, and His91. Glu53 is a substrate binding site. The substrate site is built by Arg95 and Glu105. The linker stretch occupies residues 161–177; that stretch reads PDQLLKELPFPLNTRSI. Residues 178 to 286 form a domain B region; the sequence is MKPMSLKAWL…QDPARKKPWW (109 aa).

The protein belongs to the 3-HAO family. Monomer. Requires Fe(2+) as cofactor.

The protein localises to the cytoplasm. Its subcellular location is the cytosol. The enzyme catalyses 3-hydroxyanthranilate + O2 = (2Z,4Z)-2-amino-3-carboxymuconate 6-semialdehyde. The protein operates within cofactor biosynthesis; NAD(+) biosynthesis; quinolinate from L-kynurenine: step 3/3. In terms of biological role, catalyzes the oxidative ring opening of 3-hydroxyanthranilate to 2-amino-3-carboxymuconate semialdehyde, which spontaneously cyclizes to quinolinate. This chain is 3-hydroxyanthranilate 3,4-dioxygenase (Haao), found in Mus musculus (Mouse).